Consider the following 460-residue polypeptide: Argininosuccinate lyase (460 aa).

Belongs to the lyase 1 family. Argininosuccinate lyase subfamily.

Its subcellular location is the cytoplasm. It catalyses the reaction 2-(N(omega)-L-arginino)succinate = fumarate + L-arginine. It functions in the pathway amino-acid biosynthesis; L-arginine biosynthesis; L-arginine from L-ornithine and carbamoyl phosphate: step 3/3. This is Argininosuccinate lyase from Nitratidesulfovibrio vulgaris (strain ATCC 29579 / DSM 644 / CCUG 34227 / NCIMB 8303 / VKM B-1760 / Hildenborough) (Desulfovibrio vulgaris).